We begin with the raw amino-acid sequence, 311 residues long: Transcription factor BIM2 (311 aa).

Disordered stretches follow at residues 1–60 (MRTG…RRSK) and 271–311 (ANQG…MKTL). Composition is skewed to basic and acidic residues over residues 33 to 44 (SNRDSKENDKAS) and 51 to 60 (SVTEQRRRSK). One can recognise a bHLH domain in the interval 45–95 (AIRSKHSVTEQRRRSKINERFQILRELIPNSEQKRDTASFLLEVIDYVQYL).

As to quaternary structure, homodimer. Interacts with the N-terminus of BZR2/BES1. In terms of tissue distribution, expressed constitutively in roots, leaves, stems, and flowers.

It localises to the nucleus. Functionally, positive brassinosteroid-signaling protein. This is Transcription factor BIM2 (BIM2) from Arabidopsis thaliana (Mouse-ear cress).